Reading from the N-terminus, the 321-residue chain is Phosphatidylglycerol phospholipase C (321 aa).

Residues 2–251 (VEIVGHRAFK…DDPIKARKLC (250 aa)) enclose the GP-PDE domain. The helical; Anchor for type IV membrane protein transmembrane segment at 297–315 (WVHIKLCGWSIAYVIFLFL) threads the bilayer.

The protein belongs to the glycerophosphoryl diester phosphodiesterase family.

The protein localises to the mitochondrion membrane. Its subcellular location is the lipid droplet. It carries out the reaction a 1,2-diacyl-sn-glycero-3-phospho-(1'-sn-glycerol) + H2O = sn-glycerol 3-phosphate + a 1,2-diacyl-sn-glycerol + H(+). Phosphatidylglycerol phospholipase required for the removal of excess phosphatidylglycerol (PG) via a phospholipase C-type degradation mechanism. This is Phosphatidylglycerol phospholipase C (PGC1) from Saccharomyces cerevisiae (strain ATCC 204508 / S288c) (Baker's yeast).